A 190-amino-acid polypeptide reads, in one-letter code: MKLLILSLALVLALSQVKGNQPDWADEAANGAHQDAWKSLKADVENVYYMVKATYKNDPVWGNDFTCVGVMANDVNEDEKSIQAEFLFMNNADTNMQFATEKVTAVKMYGYNRENAFRYETEDGQVFTDVIAYSDDNCDVIYVPGTDGNEEGYELWTTDYDNIPANCLNKFNEYAVGRETRDVFTSACLE.

The N-terminal stretch at 1-19 (MKLLILSLALVLALSQVKG) is a signal peptide. Ser39, Asp43, Tyr55, Asp58, Trp61, Glu101, Phe117, Tyr119, Phe127, Asp139, Glu154, and Trp156 together coordinate histamine. Intrachain disulfides connect Cys67/Cys188 and Cys138/Cys167.

It belongs to the calycin superfamily. Histamine-binding salivary protein family. As to quaternary structure, monomer. Expressed in salivary glands.

Its subcellular location is the secreted. In terms of biological role, salivary tick protein that acts by scavenging histamine at the wound site, outcompeting histamine receptors for histamine, thereby overcoming host inflammatory responses. Binds histamine with a high-affinity (Kd=1.7 nM). Contains two binding histamine sites (H and L), that appear to bind histamine with differing affinities (high and low). The polypeptide is Female-specific histamine-binding protein 2 (Rhipicephalus appendiculatus (Brown ear tick)).